A 352-amino-acid chain; its full sequence is Selenide, water dikinase (352 aa).

The active site involves cysteine 23. Residues lysine 26 and 54-56 (SRD) each bind ATP. Aspartate 57 is a binding site for Mg(2+). ATP-binding positions include aspartate 74, aspartate 97, and 145-147 (GHS). Residue aspartate 97 participates in Mg(2+) binding. Aspartate 233 is a Mg(2+) binding site.

It belongs to the selenophosphate synthase 1 family. Class I subfamily. Homodimer. Mg(2+) is required as a cofactor.

The catalysed reaction is hydrogenselenide + ATP + H2O = selenophosphate + AMP + phosphate + 2 H(+). In terms of biological role, synthesizes selenophosphate from selenide and ATP. The protein is Selenide, water dikinase of Shewanella baltica (strain OS223).